The primary structure comprises 643 residues: Cell pattern formation-associated protein asm-1 (643 aa).

The disordered stretch occupies residues M1–P37. Residues Q13–S33 are compositionally biased toward polar residues. The HTH APSES-type domain occupies R116–P222. A DNA-binding region (H-T-H motif) is located at residues G150–E171. Residues S229 to A627 are disordered. Residues D306–R335 are compositionally biased toward polar residues. The segment covering S336–T349 has biased composition (low complexity). Residues I350 to R367 show a composition bias toward polar residues. Residues Q368–Q391 are compositionally biased toward low complexity. Polar residues-rich tracts occupy residues G471–N481, Q529–N551, and S563–G577. Residues K583–K612 are nuclear localization domain.

It belongs to the EFG1/PHD1/stuA family.

Its subcellular location is the nucleus. Functionally, transcription factor that regulates asexual reproduction. Binds the StuA-response elements (StRE) with the consensus sequence 5'-(A/T)CGCG(T/A)N(A/C)-3' at the promoters of target genes. Required for rapid conidial germination, normal vegetative morphology, and protoperithecium formation. The chain is Cell pattern formation-associated protein asm-1 from Neurospora crassa (strain ATCC 24698 / 74-OR23-1A / CBS 708.71 / DSM 1257 / FGSC 987).